A 466-amino-acid polypeptide reads, in one-letter code: Oxysterol-binding protein 4 (466 aa).

Over residues 1 to 12 (MEIGTSSTTNNI) the composition is skewed to polar residues. The disordered stretch occupies residues 1-67 (MEIGTSSTTN…STSPPSPPIE (67 aa)). A compositionally biased stretch (low complexity) spans 24-45 (NNNNHNNNSSNNSSNNNSISSS). Positions 46–60 (PTDSSQLMNGEQSTS) are enriched in polar residues.

This sequence belongs to the OSBP family.

The chain is Oxysterol-binding protein 4 (osbD) from Dictyostelium discoideum (Social amoeba).